The primary structure comprises 468 residues: MKHRIQHIHFVGVGGSGMSGIAEVLLNLGYTISGSDLNESAVTRRLAELGMRIAIGHDRANVAGAGAIVTSTAVAGDNPEVLAARAARIPVVPRAVMLAELMRLKRGIAVAGTHGKTTTTSLVASVLAAGGLDPTFVIGGRLTSAGANARLGQGEYIVVEADESDASFLNLLPVMAIVTNIDADHMDTYGHDVARLKSAFIEFTQRLPFYGSAILCADDANVREIMPFVSRPITTYGLSPDAQVCAQDVQADGTRMRFTVQRRDRDVVLPALQVELNLPGLHNVRNALAAIAVATELGVDDAAIREALAAFKGVGRRFTQWGDLPVPAAHGGGTFTLVDDYGHHPVEMAATLAAARGAWPQRRIVLAFQPHRYTRTRDCFEDFVRVLGSADGVLLTEVYAAGEAPLVAADGRALSRALRVAGKVEPVFVEDVGELPQAILDFVRDGDVVVVMGAGSISKTPALVGELA.

Gly112–Thr118 contacts ATP.

This sequence belongs to the MurCDEF family.

Its subcellular location is the cytoplasm. It catalyses the reaction UDP-N-acetyl-alpha-D-muramate + L-alanine + ATP = UDP-N-acetyl-alpha-D-muramoyl-L-alanine + ADP + phosphate + H(+). The protein operates within cell wall biogenesis; peptidoglycan biosynthesis. Functionally, cell wall formation. This Bordetella bronchiseptica (strain ATCC BAA-588 / NCTC 13252 / RB50) (Alcaligenes bronchisepticus) protein is UDP-N-acetylmuramate--L-alanine ligase.